Consider the following 235-residue polypeptide: Type II secretion system protein N (235 aa).

Residues 1 to 34 (MIPRRSSDITIKTRSDVLPFSGASSRWLQRYAPA) lie on the Cytoplasmic side of the membrane. A helical; Signal-anchor for type II membrane protein membrane pass occupies residues 35-55 (LLAVALIIAMSISLAWQAAGW). The Periplasmic segment spans residues 56 to 235 (LRLQRSPVAV…EPTTTPTESD (180 aa)). Residues 205–235 (DALRQQMEATPIAEPAEEDSSEPTTTPTESD) form a disordered region. Residues 226-235 (EPTTTPTESD) are compositionally biased toward low complexity.

Its subcellular location is the cell inner membrane. Its function is as follows. Involved in a type II secretion system (T2SS, formerly general secretion pathway, GSP) for the export of proteins. Required for the translocation of a variety of enzymes across the outer membrane. The protein is Type II secretion system protein N (xcpP) of Pseudomonas aeruginosa (strain ATCC 15692 / DSM 22644 / CIP 104116 / JCM 14847 / LMG 12228 / 1C / PRS 101 / PAO1).